Here is a 577-residue protein sequence, read N- to C-terminus: Moesin (577 aa).

Residues 2 to 295 enclose the FERM domain; it reads PKTISVRVTT…GNHELYMRRR (294 aa). Residue serine 74 is modified to Phosphoserine. N6-acetyllysine is present on lysine 79. Position 83 is an N6-succinyllysine (lysine 83). Residues 115–120 carry the [IL]-x-C-x-x-[DE] motif motif; that stretch reads IYCPPE. Residue tyrosine 116 is modified to Phosphotyrosine. An S-nitrosocysteine modification is found at cysteine 117. 2 positions are modified to N6-acetyllysine: lysine 139 and lysine 165. Disordered regions lie at residues 322-342, 358-419, and 468-518; these read LLENEKKKRELAEKEKEKIER, TKKA…QLAS, and STPH…NERV. Positions 358-401 are enriched in basic and acidic residues; sequence TKKAQQELEEQTRRALELEQERKRAQSEAEKLAKERQEAEEAKE. Serine 407 is subject to Phosphoserine. Residues 492 to 518 are compositionally biased toward basic and acidic residues; that stretch reads AELRADAMAKDRSEEERTTEAEKNERV. Serine 527 carries the phosphoserine modification. The residue at position 558 (threonine 558) is a Phosphothreonine; by ROCK2 and STK10.

In resting T-cells, part of a PAG1-NHERF1-MSN complex which is disrupted upon TCR activation. Interacts with NHERF1. Interacts with PPP1R16B. Interacts with SELPLG and SYK; these interactions mediate the activation of SYK by SELPLG. Interacts with PDPN (via cytoplasmic domain); this interaction activates RHOA and promotes epithelial-mesenchymal transition. Interacts with SPN/CD43 cytoplasmic tail. Interacts with CD44. Interacts with ICAM2. Interacts with ICAM3 (via C-terminus). Interacts with PDZD8. Interacts with F-actin. Interacts with CD46. Interacts with PTPN6. In terms of processing, phosphorylation on Thr-558 by STK10 negatively regulates lymphocyte migration and polarization. Phosphorylation on Thr-558 is crucial for the formation of microvilli-like structures. Phosphorylation by ROCK2 suppresses the head-to-tail association of the N-terminal and C-terminal halves resulting in an opened conformation which is capable of actin and membrane-binding. S-nitrosylation of Cys-117 is induced by interferon-gamma and oxidatively-modified low-densitity lipoprotein (LDL(ox)) implicating the iNOS-S100A8/9 transnitrosylase complex.

Its subcellular location is the cell membrane. The protein localises to the cytoplasm. The protein resides in the cytoskeleton. It localises to the apical cell membrane. It is found in the cell projection. Its subcellular location is the microvillus membrane. The protein localises to the microvillus. Its function is as follows. Ezrin-radixin-moesin (ERM) family protein that connects the actin cytoskeleton to the plasma membrane and thereby regulates the structure and function of specific domains of the cell cortex. Tethers actin filaments by oscillating between a resting and an activated state providing transient interactions between moesin and the actin cytoskeleton. Once phosphorylated on its C-terminal threonine, moesin is activated leading to interaction with F-actin and cytoskeletal rearrangement. These rearrangements regulate many cellular processes, including cell shape determination, membrane transport, and signal transduction. The role of moesin is particularly important in immunity acting on both T and B-cells homeostasis and self-tolerance, regulating lymphocyte egress from lymphoid organs. Modulates phagolysosomal biogenesis in macrophages. Also participates in immunologic synapse formation. The protein is Moesin of Mus musculus (Mouse).